Here is a 202-residue protein sequence, read N- to C-terminus: Peptidyl-tRNA hydrolase (202 aa).

Y19 serves as a coordination point for tRNA. H24 acts as the Proton acceptor in catalysis. Residues Y70, N72, and N118 each contribute to the tRNA site.

This sequence belongs to the PTH family. As to quaternary structure, monomer.

It is found in the cytoplasm. The enzyme catalyses an N-acyl-L-alpha-aminoacyl-tRNA + H2O = an N-acyl-L-amino acid + a tRNA + H(+). In terms of biological role, hydrolyzes ribosome-free peptidyl-tRNAs (with 1 or more amino acids incorporated), which drop off the ribosome during protein synthesis, or as a result of ribosome stalling. Functionally, catalyzes the release of premature peptidyl moieties from peptidyl-tRNA molecules trapped in stalled 50S ribosomal subunits, and thus maintains levels of free tRNAs and 50S ribosomes. The chain is Peptidyl-tRNA hydrolase from Prochlorococcus marinus (strain NATL1A).